Here is a 544-residue protein sequence, read N- to C-terminus: Chaperonin GroEL 1 (544 aa).

Residues 30 to 33 (TLGP), Lys-51, 87 to 91 (DGTTT), Gly-415, 481 to 483 (DAL), and Asp-497 each bind ATP.

This sequence belongs to the chaperonin (HSP60) family. In terms of assembly, forms a cylinder of 14 subunits composed of two heptameric rings stacked back-to-back. Interacts with the co-chaperonin GroES.

The protein localises to the cytoplasm. The catalysed reaction is ATP + H2O + a folded polypeptide = ADP + phosphate + an unfolded polypeptide.. In terms of biological role, together with its co-chaperonin GroES, plays an essential role in assisting protein folding. The GroEL-GroES system forms a nano-cage that allows encapsulation of the non-native substrate proteins and provides a physical environment optimized to promote and accelerate protein folding. In Chlamydia caviae (strain ATCC VR-813 / DSM 19441 / 03DC25 / GPIC) (Chlamydophila caviae), this protein is Chaperonin GroEL 1.